Consider the following 923-residue polypeptide: Rap guanine nucleotide exchange factor 3 (923 aa).

Ser79 is subject to Phosphoserine. Positions 110-186 constitute a DEP domain; sequence ATCPNLIRDR…RDAQFYRFPG (77 aa). The tract at residues 218-242 is interaction with PDE3B; sequence TVALRKPPGQRTDEELDLIFEELLH. 3',5'-cyclic AMP contacts are provided by residues 311 to 314 and 321 to 322; these read GQLA and RA. Positions 384-518 constitute an N-terminal Ras-GEF domain; the sequence is NRYTVMSGTP…EQWPERRRCH (135 aa). The tract at residues 398–422 is interaction with PDE3B; sequence ELLLEAMGPDSSAHDPTETFLSDFL. Phosphoserine is present on residues Ser528 and Ser864. The region spanning 662-889 is the Ras-GEF domain; it reads SAKDLAGQLT…ARISTCSEQS (228 aa).

Interacts with PDE3B and PIK3R6; form a signaling complex that regulates phosphatidylinositol 3-kinase gamma in angiogenesis. As to expression, widely expressed with highest levels in adult kidney, heart, thyroid and brain, and fetal kidney.

Its subcellular location is the endomembrane system. Functionally, guanine nucleotide exchange factor (GEF) for RAP1A and RAP2A small GTPases that is activated by binding cAMP. Through simultaneous binding of PDE3B to RAPGEF3 and PIK3R6 is assembled in a signaling complex in which it activates the PI3K gamma complex and which is involved in angiogenesis. Plays a role in the modulation of the cAMP-induced dynamic control of endothelial barrier function through a pathway that is independent on Rho-mediated signaling. Required for the actin rearrangement at cell-cell junctions, such as stress fibers and junctional actin. The chain is Rap guanine nucleotide exchange factor 3 (RAPGEF3) from Homo sapiens (Human).